The sequence spans 740 residues: Ion-translocating oxidoreductase complex subunit C (740 aa).

2 consecutive 4Fe-4S ferredoxin-type domains span residues 369–397 (GEPQ…QQLY) and 407–436 (KATT…VQYF). [4Fe-4S] cluster contacts are provided by C377, C380, C383, C387, C416, C419, C422, and C426. Positions 602 to 714 (KLEQQQANAE…NAEPEEQIDP (113 aa)) are disordered. Low complexity predominate over residues 605-615 (QQQANAEPEQQ).

This sequence belongs to the 4Fe4S bacterial-type ferredoxin family. RnfC subfamily. As to quaternary structure, the complex is composed of six subunits: RsxA, RsxB, RsxC, RsxD, RsxE and RsxG. [4Fe-4S] cluster is required as a cofactor.

It is found in the cell inner membrane. In terms of biological role, part of a membrane-bound complex that couples electron transfer with translocation of ions across the membrane. Required to maintain the reduced state of SoxR. The protein is Ion-translocating oxidoreductase complex subunit C of Escherichia coli O17:K52:H18 (strain UMN026 / ExPEC).